A 242-amino-acid chain; its full sequence is DnaJ homolog subfamily B member 6 (242 aa).

A J domain is found at V2 to G69. Residues V2–G146 are interaction with HSP70. An interaction with KRT18 region spans residues F119 to K242. Omega-N-methylarginine is present on R135.

Homooligomer. Interacts with BAG3, HSPB8 and STUB1. Interacts with ALKBH1. Interacts with HSP70, KRT18 and PTTG. Expressed in all tissues examined with highest expression in brain and retina and lower levels observed in testis, spleen, heart, liver and kidney.

The protein localises to the cytoplasm. Its subcellular location is the perinuclear region. The protein resides in the nucleus. It is found in the myofibril. It localises to the sarcomere. The protein localises to the z line. Functionally, has a stimulatory effect on the ATPase activity of HSP70 in a dose-dependent and time-dependent manner and hence acts as a co-chaperone of HSP70. Plays an indispensable role in the organization of KRT8/KRT18 filaments. Acts as an endogenous molecular chaperone for neuronal proteins including huntingtin. Suppresses aggregation and toxicity of polyglutamine-containing, aggregation-prone proteins. Also reduces cellular toxicity and caspase-3 activity. The protein is DnaJ homolog subfamily B member 6 (DNAJB6) of Bos taurus (Bovine).